Reading from the N-terminus, the 479-residue chain is Serine palmitoyltransferase 1 (479 aa).

The Lumenal segment spans residues 1-16 (MFLFDIYNNILYYTKE). A helical membrane pass occupies residues 17–37 (FIVTSTSPNLFIHGLMAVFII). Residues 38–479 (YLLTKRPFKP…KCTSFVLESN (442 aa)) are Cytoplasmic-facing.

It belongs to the class-II pyridoxal-phosphate-dependent aminotransferase family. In terms of assembly, forms a heterodimer with sptB. Requires pyridoxal 5'-phosphate as cofactor.

It localises to the endoplasmic reticulum membrane. The catalysed reaction is L-serine + hexadecanoyl-CoA + H(+) = 3-oxosphinganine + CO2 + CoA. Its pathway is lipid metabolism; sphingolipid metabolism. Functionally, component of serine palmitoyltransferase (SPT), which catalyzes the committed step in the synthesis of sphingolipids, the condensation of serine with palmitoyl CoA to form the long chain base 3-ketosphinganine. This chain is Serine palmitoyltransferase 1 (sptA), found in Dictyostelium discoideum (Social amoeba).